A 409-amino-acid polypeptide reads, in one-letter code: Argininosuccinate synthase (409 aa).

ATP contacts are provided by residues 12–20 (AYSGGLDTS) and Ala39. Tyr91 contacts L-citrulline. Gly121 is an ATP binding site. Positions 123, 127, and 128 each coordinate L-aspartate. Position 127 (Asn127) interacts with L-citrulline. Positions 131, 180, 189, 265, and 277 each coordinate L-citrulline.

The protein belongs to the argininosuccinate synthase family. Type 1 subfamily. In terms of assembly, homotetramer.

The protein localises to the cytoplasm. It catalyses the reaction L-citrulline + L-aspartate + ATP = 2-(N(omega)-L-arginino)succinate + AMP + diphosphate + H(+). The protein operates within amino-acid biosynthesis; L-arginine biosynthesis; L-arginine from L-ornithine and carbamoyl phosphate: step 2/3. The chain is Argininosuccinate synthase from Buchnera aphidicola subsp. Baizongia pistaciae (strain Bp).